Here is a 747-residue protein sequence, read N- to C-terminus: Heterogeneous nuclear ribonucleoprotein U-like protein 2 (747 aa).

Residues 3–37 enclose the SAP domain; it reads VKRLKVTELRSELQRRGLDSRGLKVDLAQRLQEAL. Disordered stretches follow at residues 40–242 and 627–666; these read EMLE…EEED and EEAR…GQRR. Residues 73 to 97 are compositionally biased toward acidic residues; it reads GDEEEDEEEEEEDEEALLEDEDEEP. Residues 115 to 125 are compositionally biased toward low complexity; sequence EAAAMEAAAEP. The segment covering 137–147 has biased composition (gly residues); it reads GSGGVNGGEEQ. The span at 148–163 shows a compositional bias: basic and acidic residues; it reads GLGKREEDEPEERSGD. Serine 161 bears the Phosphoserine mark. The residue at position 165 (threonine 165) is a Phosphothreonine. 5 positions are modified to phosphoserine: serine 168, serine 185, serine 188, serine 226, and serine 228. A compositionally biased stretch (basic and acidic residues) spans 185 to 223; the sequence is SEKSKPAGSDGERRGVKRQRDEKDEHGRAYYEFREEAYH. The B30.2/SPRY domain occupies 226–419; the sequence is SKSPLPPEEE…VELNFGQKEE (194 aa). Residues 232 to 242 show a composition bias toward acidic residues; the sequence is PEEEAKDEEED. The span at 627–639 shows a compositional bias: basic and acidic residues; it reads EEARKLLPPSEKR. Residues 640–654 are compositionally biased toward basic residues; the sequence is TNRRNNRNKRNRQNR. An omega-N-methylarginine mark is found at arginine 656, arginine 684, arginine 738, and arginine 747.

Binds to MLF1 and retains it in the nucleus.

Its subcellular location is the nucleus. This is Heterogeneous nuclear ribonucleoprotein U-like protein 2 (HNRNPUL2) from Homo sapiens (Human).